The following is a 232-amino-acid chain: Orotidine 5'-phosphate decarboxylase (232 aa).

Residues D10, K32, 59–68 (DLKFHDIPNT), T119, R180, Q189, G209, and R210 each bind substrate. Residue K61 is the Proton donor of the active site.

This sequence belongs to the OMP decarboxylase family. Type 1 subfamily. In terms of assembly, homodimer.

The enzyme catalyses orotidine 5'-phosphate + H(+) = UMP + CO2. The protein operates within pyrimidine metabolism; UMP biosynthesis via de novo pathway; UMP from orotate: step 2/2. Its function is as follows. Catalyzes the decarboxylation of orotidine 5'-monophosphate (OMP) to uridine 5'-monophosphate (UMP). The chain is Orotidine 5'-phosphate decarboxylase from Actinobacillus succinogenes (strain ATCC 55618 / DSM 22257 / CCUG 43843 / 130Z).